The primary structure comprises 483 residues: L-2-hydroxyglutarate dehydrogenase, mitochondrial (483 aa).

Residues 1-67 (MKHKPETAAF…VDASKTIVRG (67 aa)) constitute a mitochondrion transit peptide.

Belongs to the L2HGDH family. Requires FAD as cofactor.

The protein resides in the mitochondrion. It carries out the reaction (S)-2-hydroxyglutarate + A = 2-oxoglutarate + AH2. Functionally, catalyzes the oxidation of (S)-2-hydroxyglutarate to 2-oxoglutarate. Is specific for the (S) enantiomer and possesses very poor activity toward (R)-2-hydroxyglutarate. Has no activity toward related 2-hydroxy acids, such as glycolate, L-lactate or D-lactate. The protein is L-2-hydroxyglutarate dehydrogenase, mitochondrial of Arabidopsis thaliana (Mouse-ear cress).